The following is a 101-amino-acid chain: NAD(P)H-quinone oxidoreductase subunit 4L, chloroplastic (101 aa).

The next 3 helical transmembrane spans lie at 2-22 (MLEH…YGLI), 32-52 (MCLE…SDFF), and 61-81 (ILSI…LAIV).

This sequence belongs to the complex I subunit 4L family. NDH is composed of at least 16 different subunits, 5 of which are encoded in the nucleus.

Its subcellular location is the plastid. It localises to the chloroplast thylakoid membrane. The catalysed reaction is a plastoquinone + NADH + (n+1) H(+)(in) = a plastoquinol + NAD(+) + n H(+)(out). The enzyme catalyses a plastoquinone + NADPH + (n+1) H(+)(in) = a plastoquinol + NADP(+) + n H(+)(out). In terms of biological role, NDH shuttles electrons from NAD(P)H:plastoquinone, via FMN and iron-sulfur (Fe-S) centers, to quinones in the photosynthetic chain and possibly in a chloroplast respiratory chain. The immediate electron acceptor for the enzyme in this species is believed to be plastoquinone. Couples the redox reaction to proton translocation, and thus conserves the redox energy in a proton gradient. The sequence is that of NAD(P)H-quinone oxidoreductase subunit 4L, chloroplastic from Buxus microphylla (Littleleaf boxwood).